A 41-amino-acid polypeptide reads, in one-letter code: Large ribosomal subunit protein bL36 (41 aa).

This sequence belongs to the bacterial ribosomal protein bL36 family.

This is Large ribosomal subunit protein bL36 from Opitutus terrae (strain DSM 11246 / JCM 15787 / PB90-1).